The sequence spans 278 residues: Para-Rep C1 (278 aa).

The 95-residue stretch at 1 to 95 (MACSNWVFTR…VAGPWSYGDL (95 aa)) folds into the CRESS-DNA virus Rep endonuclease domain. The short motif at 8-11 (FTRN) is the RCR-1 element. A divalent metal cation contacts are provided by glutamate 33 and histidine 39. An RCR-2 motif is present at residues 39 to 41 (HIQ). The Nuclear localization signal motif lies at 48–69 (KKARFSTVKEIIGGNPHVEKMK). The For DNA cleavage activity role is filled by tyrosine 78. Residues 78–81 (YVQK) carry the RCR-3 motif. Residue glutamate 83 participates in a divalent metal cation binding. The Nuclear localization signal signature appears at 95 to 101 (LLKRGSH). ATP is bound at residue 176–178 (GKS).

It belongs to the nanoviridea/circoviridae replication-associated protein family. As to quaternary structure, homooligomer (Potential). Rep binds to repeated DNA motifs (iterons). Mg(2+) is required as a cofactor. It depends on Mn(2+) as a cofactor.

It localises to the host nucleus. It carries out the reaction ATP + H2O = ADP + phosphate + H(+). Its function is as follows. Initiates and terminates the replication only of its own subviral DNA molecule. The closed circular ssDNA genome is first converted to a superhelical dsDNA. Rep binds a specific hairpin at the genome origin of replication. Introduces an endonucleolytic nick within the intergenic region of the genome, thereby initiating the rolling circle replication (RCR). Following cleavage, binds covalently to the 5'-phosphate of DNA as a tyrosyl ester. The cleavage gives rise to a free 3'-OH that serves as a primer for the cellular DNA polymerase. The polymerase synthesizes the (+) strand DNA by rolling circle mechanism. After one round of replication, a Rep-catalyzed nucleotidyl transfer reaction releases a circular single-stranded virus genome, thereby terminating the replication. Displays origin-specific DNA cleavage, nucleotidyl transferase, ATPase and helicase activities. The sequence is that of Para-Rep C1 (C1) from Faba bean necrotic yellows C1 alphasatellite (FBNYC1A).